The chain runs to 686 residues: Gamma-aminobutyric acid receptor alpha-like (686 aa).

The first 58 residues, 1–58 (MCTMPATRDASGSGDASTDLIAARSLSSHQGQRSNLRIFKLLISCCLLMLCIYPNAWP), serve as a signal peptide directing secretion. Residues 97 to 393 (SSWLTQSNNH…NFHLQRHMGN (297 aa)) lie on the Extracellular side of the membrane. N108 carries an N-linked (GlcNAc...) asparagine glycan. A disulfide bond links C233 and C247. Residue N292 is glycosylated (N-linked (GlcNAc...) asparagine). The next 3 helical transmembrane spans lie at 394–414 (FLIQVYGPCCLLVVLSWVSFW), 424–441 (VSLGITTVLTMTFLGLEA), and 456–476 (FFVFLSFGFIFATILQFAVVH). The Cytoplasmic portion of the chain corresponds to 477–650 (YYTKYGSGEC…YNSVSKIDRA (174 aa)). Positions 570-641 (KPPRADSDED…RRKGKRTPQY (72 aa)) are disordered. A compositionally biased stretch (polar residues) spans 586 to 596 (QLRANEAPTTS). Positions 597–609 (AAAAAAQAAAQAA) are enriched in low complexity. A helical membrane pass occupies residues 651 to 671 (SRIVFPLLFILINVFYWYGYL).

It belongs to the ligand-gated ion channel (TC 1.A.9) family. Gamma-aminobutyric acid receptor (TC 1.A.9.5) subfamily. Generally pentameric. There are five types of GABA(A) receptor chains: alpha, beta, gamma, delta, and rho. Interacts with Lcch3 (beta chain).

Its subcellular location is the postsynaptic cell membrane. It is found in the cell membrane. In terms of biological role, GABA, an inhibitory neurotransmitter, mediates neuronal inhibition by binding to the GABA receptor and opening an integral chloride channel. May combine with the ligand-gated ion channel subunit Lcch3 to form cation-selective GABA-gated ion channels. This chain is Gamma-aminobutyric acid receptor alpha-like (Grd), found in Drosophila melanogaster (Fruit fly).